Reading from the N-terminus, the 91-residue chain is Small ribosomal subunit protein bS18 (91 aa).

The interval 1–21 (MSDERTPQRSSGPRKKRPFQR) is disordered. Over residues 12–21 (GPRKKRPFQR) the composition is skewed to basic residues.

It belongs to the bacterial ribosomal protein bS18 family. As to quaternary structure, part of the 30S ribosomal subunit. Forms a tight heterodimer with protein bS6.

Functionally, binds as a heterodimer with protein bS6 to the central domain of the 16S rRNA, where it helps stabilize the platform of the 30S subunit. This is Small ribosomal subunit protein bS18 from Geotalea uraniireducens (strain Rf4) (Geobacter uraniireducens).